The sequence spans 211 residues: Large ribosomal subunit protein uL4 (211 aa).

The segment at 40 to 80 is disordered; that stretch reads QQAHSRQGTASTLTRSEVRGGGRKPYKQKGTGRARQGSIRT. The segment covering 41–54 has biased composition (polar residues); it reads QAHSRQGTASTLTR. The span at 60 to 71 shows a compositional bias: basic residues; it reads GGRKPYKQKGTG.

Belongs to the universal ribosomal protein uL4 family. Part of the 50S ribosomal subunit.

One of the primary rRNA binding proteins, this protein initially binds near the 5'-end of the 23S rRNA. It is important during the early stages of 50S assembly. It makes multiple contacts with different domains of the 23S rRNA in the assembled 50S subunit and ribosome. Functionally, forms part of the polypeptide exit tunnel. This Prochlorococcus marinus (strain MIT 9211) protein is Large ribosomal subunit protein uL4.